The primary structure comprises 1391 residues: DNA-directed RNA polymerase subunit beta' (1391 aa).

Residues cysteine 72, cysteine 74, cysteine 87, and cysteine 90 each contribute to the Zn(2+) site. Mg(2+) contacts are provided by aspartate 462, aspartate 464, and aspartate 466. 4 residues coordinate Zn(2+): cysteine 816, cysteine 890, cysteine 897, and cysteine 900.

It belongs to the RNA polymerase beta' chain family. In terms of assembly, the RNAP catalytic core consists of 2 alpha, 1 beta, 1 beta' and 1 omega subunit. When a sigma factor is associated with the core the holoenzyme is formed, which can initiate transcription. It depends on Mg(2+) as a cofactor. Zn(2+) is required as a cofactor.

The catalysed reaction is RNA(n) + a ribonucleoside 5'-triphosphate = RNA(n+1) + diphosphate. Functionally, DNA-dependent RNA polymerase catalyzes the transcription of DNA into RNA using the four ribonucleoside triphosphates as substrates. In Neisseria meningitidis serogroup B (strain ATCC BAA-335 / MC58), this protein is DNA-directed RNA polymerase subunit beta'.